We begin with the raw amino-acid sequence, 109 residues long: Cytochrome c (109 aa).

Heme c-binding residues include C25, C28, H29, and M88.

This sequence belongs to the cytochrome c family. In terms of processing, binds 1 heme c group covalently per subunit.

It is found in the mitochondrion intermembrane space. Its function is as follows. Electron carrier protein. The oxidized form of the cytochrome c heme group can accept an electron from the heme group of the cytochrome c1 subunit of cytochrome reductase. Cytochrome c then transfers this electron to the cytochrome oxidase complex, the final protein carrier in the mitochondrial electron-transport chain. The chain is Cytochrome c from Tetrahymena pyriformis.